The sequence spans 160 residues: MELRETKVAVYGKGGIGKSTTSCNTSIALARRGRRILQIGCDPKHDSTFTPTGFSIPTIIDTSQSKDYHYEDVWPEDVIHRGYGGVDCVEAGGPPAGAGCGGYVVGETVKPLKESNAFYEYDIILFDVLGDVVCGGFAAPLNYADYCIIITDNGFDALSA.

ATP contacts are provided by residues 15–20 (GIGKST) and lysine 44. Residue serine 19 participates in Mg(2+) binding. [4Fe-4S] cluster is bound by residues cysteine 100 and cysteine 134.

This sequence belongs to the NifH/BchL/ChlL family. Homodimer. Protochlorophyllide reductase is composed of three subunits; ChlL, ChlN and ChlB. The cofactor is [4Fe-4S] cluster.

It is found in the plastid. The protein resides in the chloroplast. It catalyses the reaction chlorophyllide a + oxidized 2[4Fe-4S]-[ferredoxin] + 2 ADP + 2 phosphate = protochlorophyllide a + reduced 2[4Fe-4S]-[ferredoxin] + 2 ATP + 2 H2O. The protein operates within porphyrin-containing compound metabolism; chlorophyll biosynthesis (light-independent). Component of the dark-operative protochlorophyllide reductase (DPOR) that uses Mg-ATP and reduced ferredoxin to reduce ring D of protochlorophyllide (Pchlide) to form chlorophyllide a (Chlide). This reaction is light-independent. The L component serves as a unique electron donor to the NB-component of the complex, and binds Mg-ATP. The protein is Light-independent protochlorophyllide reductase iron-sulfur ATP-binding protein (chlL) of Polystichum acrostichoides (Christmas fern).